The sequence spans 191 residues: Adenylate kinase (191 aa).

An ATP-binding site is contributed by 9–17 (GVPGVGATT).

It belongs to the archaeal adenylate kinase family.

It is found in the cytoplasm. It catalyses the reaction AMP + ATP = 2 ADP. This Methanopyrus kandleri (strain AV19 / DSM 6324 / JCM 9639 / NBRC 100938) protein is Adenylate kinase.